The primary structure comprises 498 residues: Lysine--tRNA ligase (498 aa).

Mg(2+) is bound by residues Glu401 and Glu408.

Belongs to the class-II aminoacyl-tRNA synthetase family. In terms of assembly, homodimer. It depends on Mg(2+) as a cofactor.

It is found in the cytoplasm. It carries out the reaction tRNA(Lys) + L-lysine + ATP = L-lysyl-tRNA(Lys) + AMP + diphosphate. This Dehalococcoides mccartyi (strain ATCC BAA-2266 / KCTC 15142 / 195) (Dehalococcoides ethenogenes (strain 195)) protein is Lysine--tRNA ligase.